Here is a 514-residue protein sequence, read N- to C-terminus: Membrane-bound lytic murein transglycosylase F (514 aa).

Residues 1 to 30 (MKKLKINYLFIGILTLLLAAALWPSIPWFG) form the signal peptide. The tract at residues 31–269 (KTENHIAAIQ…RIEEKYLGHG (239 aa)) is non-LT domain. The LT domain stretch occupies residues 270 to 514 (DDFDYVDTRS…LFTPQKKEEK (245 aa)). Glu-314 is a catalytic residue.

The protein in the N-terminal section; belongs to the bacterial solute-binding protein 3 family. In the C-terminal section; belongs to the transglycosylase Slt family.

It is found in the cell outer membrane. It carries out the reaction Exolytic cleavage of the (1-&gt;4)-beta-glycosidic linkage between N-acetylmuramic acid (MurNAc) and N-acetylglucosamine (GlcNAc) residues in peptidoglycan, from either the reducing or the non-reducing ends of the peptidoglycan chains, with concomitant formation of a 1,6-anhydrobond in the MurNAc residue.. In terms of biological role, murein-degrading enzyme that degrades murein glycan strands and insoluble, high-molecular weight murein sacculi, with the concomitant formation of a 1,6-anhydromuramoyl product. Lytic transglycosylases (LTs) play an integral role in the metabolism of the peptidoglycan (PG) sacculus. Their lytic action creates space within the PG sacculus to allow for its expansion as well as for the insertion of various structures such as secretion systems and flagella. This Salmonella paratyphi A (strain ATCC 9150 / SARB42) protein is Membrane-bound lytic murein transglycosylase F.